Reading from the N-terminus, the 333-residue chain is 4-hydroxy-3-methylbut-2-enyl diphosphate reductase (333 aa).

Residue Cys34 coordinates [4Fe-4S] cluster. The (2E)-4-hydroxy-3-methylbut-2-enyl diphosphate site is built by His63 and His96. Residues His63 and His96 each coordinate dimethylallyl diphosphate. Residues His63 and His96 each coordinate isopentenyl diphosphate. Position 118 (Cys118) interacts with [4Fe-4S] cluster. His146 contacts (2E)-4-hydroxy-3-methylbut-2-enyl diphosphate. His146 is a dimethylallyl diphosphate binding site. His146 contributes to the isopentenyl diphosphate binding site. Catalysis depends on Glu148, which acts as the Proton donor. Thr186 is a (2E)-4-hydroxy-3-methylbut-2-enyl diphosphate binding site. Cys216 is a [4Fe-4S] cluster binding site. Residues Ser244, Ser245, Asn246, and Ser289 each coordinate (2E)-4-hydroxy-3-methylbut-2-enyl diphosphate. Ser244, Ser245, Asn246, and Ser289 together coordinate dimethylallyl diphosphate. Isopentenyl diphosphate-binding residues include Ser244, Ser245, Asn246, and Ser289.

The protein belongs to the IspH family. [4Fe-4S] cluster is required as a cofactor.

The enzyme catalyses isopentenyl diphosphate + 2 oxidized [2Fe-2S]-[ferredoxin] + H2O = (2E)-4-hydroxy-3-methylbut-2-enyl diphosphate + 2 reduced [2Fe-2S]-[ferredoxin] + 2 H(+). It carries out the reaction dimethylallyl diphosphate + 2 oxidized [2Fe-2S]-[ferredoxin] + H2O = (2E)-4-hydroxy-3-methylbut-2-enyl diphosphate + 2 reduced [2Fe-2S]-[ferredoxin] + 2 H(+). It functions in the pathway isoprenoid biosynthesis; dimethylallyl diphosphate biosynthesis; dimethylallyl diphosphate from (2E)-4-hydroxy-3-methylbutenyl diphosphate: step 1/1. Its pathway is isoprenoid biosynthesis; isopentenyl diphosphate biosynthesis via DXP pathway; isopentenyl diphosphate from 1-deoxy-D-xylulose 5-phosphate: step 6/6. Catalyzes the conversion of 1-hydroxy-2-methyl-2-(E)-butenyl 4-diphosphate (HMBPP) into a mixture of isopentenyl diphosphate (IPP) and dimethylallyl diphosphate (DMAPP). Acts in the terminal step of the DOXP/MEP pathway for isoprenoid precursor biosynthesis. The polypeptide is 4-hydroxy-3-methylbut-2-enyl diphosphate reductase (Mycobacterium sp. (strain KMS)).